The primary structure comprises 151 residues: Ribosome maturation factor RimP (151 aa).

It belongs to the RimP family.

Its subcellular location is the cytoplasm. Functionally, required for maturation of 30S ribosomal subunits. The polypeptide is Ribosome maturation factor RimP (Shewanella sp. (strain ANA-3)).